Here is a 259-residue protein sequence, read N- to C-terminus: Flagellar brake protein YcgR (259 aa).

Residues 129 to 246 (QRREFYRLQT…DNAIQRYIFK (118 aa)) form the PilZ domain.

It belongs to the YcgR family. As to quaternary structure, monomer. Interacts with the flagellar basal bodies.

It is found in the bacterial flagellum basal body. In terms of biological role, acts as a flagellar brake, regulating swimming and swarming in a bis-(3'-5') cyclic diguanylic acid (c-di-GMP)-dependent manner. Binds 1 c-di-GMP dimer per subunit. Increasing levels of c-di-GMP lead to decreased motility. The polypeptide is Flagellar brake protein YcgR (Azoarcus sp. (strain BH72)).